We begin with the raw amino-acid sequence, 119 residues long: Large ribosomal subunit protein bL20 (119 aa).

Belongs to the bacterial ribosomal protein bL20 family.

Functionally, binds directly to 23S ribosomal RNA and is necessary for the in vitro assembly process of the 50S ribosomal subunit. It is not involved in the protein synthesizing functions of that subunit. In Aromatoleum aromaticum (strain DSM 19018 / LMG 30748 / EbN1) (Azoarcus sp. (strain EbN1)), this protein is Large ribosomal subunit protein bL20.